The sequence spans 743 residues: Sulfhydryl oxidase 1 (743 aa).

The first 42 residues, 1 to 42 (MWRRRARSGGGGGGGGGGAAPRCRWWPAVLALLAAALPAARS), serve as a signal peptide directing secretion. Residues 43-166 (RSLYSPSDPL…LRRAIITNLE (124 aa)) form the Thioredoxin domain. Active-site nucleophile residues include Cys-80 and Cys-83. 2 disulfides stabilise this stretch: Cys-80/Cys-83 and Cys-111/Cys-120. Residues Asn-254, Asn-288, Asn-295, Asn-371, and Asn-401 are each glycosylated (N-linked (GlcNAc...) asparagine). Cysteines 407 and 419 form a disulfide. Residues 410–513 (SEPHFRGYPC…EDPQFPKLQW (104 aa)) form the ERV/ALR sulfhydryl oxidase domain. FAD-binding positions include Arg-415, Trp-422, His-426, Glu-461, His-465, 488 to 495 (WSHHNEVN), Lys-510, and Trp-513. Residues Cys-459 and Cys-462 are joined by a disulfide bond. A disulfide bond links Cys-519 and Cys-522. Residues 567 to 617 (ASARLSTAGLREKEEEERKEEEEEGEKETEKPHREGETGRPGSSELRRPSI) are disordered. The span at 580 to 593 (EEEERKEEEEEGEK) shows a compositional bias: acidic residues. A compositionally biased stretch (basic and acidic residues) spans 594–604 (ETEKPHREGET). Residues 707–727 (SLCIALYFLSSMCLLGMYTFF) form a helical membrane-spanning segment.

This sequence belongs to the quiescin-sulfhydryl oxidase (QSOX) family. It depends on FAD as a cofactor. In terms of processing, N-glycosylated. O-glycosylated on Thr and Ser residues.

It localises to the golgi apparatus membrane. It is found in the secreted. It carries out the reaction 2 R'C(R)SH + O2 = R'C(R)S-S(R)CR' + H2O2. In terms of biological role, catalyzes the oxidation of sulfhydryl groups in peptide and protein thiols to disulfides with the reduction of oxygen to hydrogen peroxide. Plays a role in disulfide bond formation in a variety of extracellular proteins. In fibroblasts, required for normal incorporation of laminin into the extracellular matrix, and thereby for normal cell-cell adhesion and cell migration. This is Sulfhydryl oxidase 1 (QSOX1) from Gallus gallus (Chicken).